The primary structure comprises 212 residues: uncharacterized protein (212 aa).

S-adenosyl-L-methionine contacts are provided by Gly-53, Glu-74, and Asp-97.

The protein belongs to the methyltransferase superfamily. YrrT family.

Functionally, could be a S-adenosyl-L-methionine-dependent methyltransferase. This is an uncharacterized protein from Bacillus thuringiensis (strain Al Hakam).